The sequence spans 420 residues: Carboxypeptidase A4 (420 aa).

The signal sequence occupies residues 1–16 (MKWLLFFGALIGAGIC). The propeptide at 17-113 (GRDKFFGDQV…EMQHNEGIER (97 aa)) is activation peptide. 7 residues coordinate a protein: Pro-69, Val-71, Asn-118, Tyr-122, His-123, Glu-126, and Phe-162. Residues 121–415 (AYHPLEAIYH…LGLKTIMEHV (295 aa)) enclose the Peptidase M14 domain. Residues His-180 and Glu-183 each contribute to the Zn(2+) site. Cys-249 and Cys-272 are joined by a disulfide. An N-linked (GlcNAc...) asparagine glycan is attached at Asn-259. His-307 serves as a coordination point for Zn(2+). Glu-381 acts as the Proton donor/acceptor in catalysis.

This sequence belongs to the peptidase M14 family. Interacts with LXN. The cofactor is Zn(2+).

It is found in the secreted. Its function is as follows. Metalloprotease that cleaves hydrophobic C-terminal residues with a preference for -Phe, -Leu, -Ile, -Met, -Tyr and -Val. May function in peptide hormone and/or neuropeptide catabolism. The polypeptide is Carboxypeptidase A4 (Cpa4) (Mus musculus (Mouse)).